The primary structure comprises 135 residues: Large ribosomal subunit protein bL17 (135 aa).

It belongs to the bacterial ribosomal protein bL17 family. As to quaternary structure, part of the 50S ribosomal subunit. Contacts protein L32.

In Listeria welshimeri serovar 6b (strain ATCC 35897 / DSM 20650 / CCUG 15529 / CIP 8149 / NCTC 11857 / SLCC 5334 / V8), this protein is Large ribosomal subunit protein bL17.